Consider the following 118-residue polypeptide: NLIDFKNMIKCTNTRHWVSFTNYGCYCGYGGSGTPVDELDKCCQVHDKCYDTAKHVCKCSPSMTMYSYDCSEGKLTCKDNNTKCKDFVCNCDRTAALCFAKAPYNNKNFKIDPTKGCQ.

Disulfide bonds link C11–C70, C25–C117, C27–C43, C42–C98, C49–C91, C59–C84, and C77–C89. Residues Y26, G28, and G30 each contribute to the Ca(2+) site. H46 is an active-site residue. D47 is a Ca(2+) binding site. D92 is a catalytic residue.

This sequence belongs to the phospholipase A2 family. Group I subfamily. D49 sub-subfamily. Ca(2+) serves as cofactor. As to expression, expressed by the venom gland.

It is found in the secreted. The enzyme catalyses a 1,2-diacyl-sn-glycero-3-phosphocholine + H2O = a 1-acyl-sn-glycero-3-phosphocholine + a fatty acid + H(+). Its function is as follows. Snake venom phospholipase A2 (PLA2) that has only a weak enzymatic activity. It has a myotoxic activity in vivo (dystrophic effect). PLA2 catalyzes the calcium-dependent hydrolysis of the 2-acyl groups in 3-sn-phosphoglycerides. The protein is Basic phospholipase A2 nigroxin B of Micrurus nigrocinctus (Central American coral snake).